Here is a 526-residue protein sequence, read N- to C-terminus: 3',5'-cyclic-nucleotide phosphodiesterase 2 (526 aa).

The PDEase domain maps to 182 to 526 (RNIEFMSFLS…EYWMKHKKPQ (345 aa)). H265 functions as the Proton donor in the catalytic mechanism. The a divalent metal cation site is built by H269, H302, D303, and D400.

It belongs to the cyclic nucleotide phosphodiesterase family. In terms of assembly, monomer. A divalent metal cation serves as cofactor.

It carries out the reaction 3',5'-cyclic AMP + H2O = AMP + H(+). Controls the level of cAMP in yeast cells, together with the low-affinity cAMP phosphodiesterase (PDE1). The protein is 3',5'-cyclic-nucleotide phosphodiesterase 2 of Saccharomyces cerevisiae (strain ATCC 204508 / S288c) (Baker's yeast).